An 88-amino-acid polypeptide reads, in one-letter code: Small ribosomal subunit protein bS20 (88 aa).

It belongs to the bacterial ribosomal protein bS20 family.

In terms of biological role, binds directly to 16S ribosomal RNA. The polypeptide is Small ribosomal subunit protein bS20 (Clostridium acetobutylicum (strain ATCC 824 / DSM 792 / JCM 1419 / IAM 19013 / LMG 5710 / NBRC 13948 / NRRL B-527 / VKM B-1787 / 2291 / W)).